The chain runs to 289 residues: uncharacterized protein (289 aa).

Over residues 1 to 20 the composition is skewed to basic and acidic residues; the sequence is MNPMDRQTEGQEPQHQDRQP. Residues 1-39 form a disordered region; the sequence is MNPMDRQTEGQEPQHQDRQPGIESKMNPLPLSEDEDYRG. 49–73 contributes to the NADP(+) binding site; that stretch reads IITGGDSGIGRAAAIAFAKEGADIS. Ser181 is a substrate binding site. Tyr194 serves as the catalytic Proton acceptor.

This sequence belongs to the short-chain dehydrogenases/reductases (SDR) family.

This is an uncharacterized protein from Bacillus subtilis (strain 168).